The chain runs to 343 residues: Twinfilin (343 aa).

ADF-H domains follow at residues 4-139 (QTGI…KHKI) and 177-312 (GINC…EELH). The tract at residues 317 to 343 (NLRPQFSKPKGPPSRGAKRLTKPQAVE) is disordered.

The protein belongs to the actin-binding proteins ADF family. Twinfilin subfamily. In terms of assembly, interacts with G-actin; ADP-actin form.

The protein resides in the cytoplasm. The protein localises to the cytoskeleton. It is found in the cell cortex. Actin-binding protein involved in motile and morphological processes. Inhibits actin polymerization, likely by sequestering G-actin. This chain is Twinfilin (twf), found in Aedes aegypti (Yellowfever mosquito).